The primary structure comprises 467 residues: Probable amino acid permease 7 (467 aa).

The Cytoplasmic portion of the chain corresponds to 1 to 29 (MDIKEDDESRVITPTELQLHDSVTARTGT). The chain crosses the membrane as a helical span at residues 30–50 (LWTAVAHIITGVIGAGVLSLA). Over 51 to 58 (WATAELGW) the chain is Extracellular. The helical transmembrane segment at 59 to 79 (IAGPAALIAFAGVTLLSAFLL) threads the bilayer. Over 80–111 (SDCYRFPDPNNGPLRLNSYSQAVKLYLGKKNE) the chain is Cytoplasmic. The chain crosses the membrane as a helical span at residues 112 to 132 (IVCGVVVYISLFGCGIAYTIV). Residues 133–163 (IATCSRAIMKSNCYHRNGHNATCSYGDNNNY) lie on the Extracellular side of the membrane. 2 consecutive transmembrane segments (helical) span residues 164-184 (FMVL…FHNM) and 185-205 (VWLS…GIGL). Residues 206–231 (ALGKIIENRKIEGSIRGIPAENRGEK) are Extracellular-facing. Residues 232–252 (VWIVFQALGNIAFSYPFSIIL) form a helical membrane-spanning segment. The Cytoplasmic segment spans residues 253–274 (LEIQDTLRSPPAEKQTMKKAST). A helical membrane pass occupies residues 275-295 (VAVFIQTFFFFCCGCFGYAAF). The Extracellular segment spans residues 296-312 (GDSTPGNLLTGFGFYEP). Residues 313 to 333 (FWLVDFANACIVLHLVGGYQV) form a helical membrane-spanning segment. Over 334–383 (YSQPIFAAAERSLTKKYPENKFIARFYGFKLPLLRGETVRLNPMRMCLRT) the chain is Cytoplasmic. 2 helical membrane-spanning segments follow: residues 384–404 (MYVL…EVLG) and 405–425 (VVGA…MCIL). Over 426–443 (QKKIRSWTRPWLLLRGFS) the chain is Cytoplasmic. A helical membrane pass occupies residues 444 to 464 (FVCLLVCLLSLVGSIYGLVGA). The Extracellular segment spans residues 465–467 (KFG).

Belongs to the amino acid/polyamine transporter 2 family. Amino acid/auxin permease (AAAP) (TC 2.A.18.2) subfamily.

The protein localises to the cell membrane. In terms of biological role, amino acid-proton symporter. Stereospecific transporter with a broad specificity for neutral amino acids. This chain is Probable amino acid permease 7 (AAP7), found in Arabidopsis thaliana (Mouse-ear cress).